The following is a 177-amino-acid chain: Interleukin-1 receptor antagonist protein (177 aa).

The signal sequence occupies residues 1-25 (MEICRGLRSHLITLLLFLFHSETIC). A disulfide bridge links Cys91 with Cys141. A glycan (N-linked (GlcNAc...) asparagine) is linked at Asn109.

The protein belongs to the IL-1 family. The intracellular form of IL1RN is predominantly expressed in epithelial cells.

It localises to the secreted. The protein resides in the cytoplasm. Functionally, anti-inflammatory antagonist of interleukin-1 family of proinflammatory cytokines such as interleukin-1beta/IL1B and interleukin-1alpha/IL1A. Protects from immune dysregulation and uncontrolled systemic inflammation triggered by IL1 for a range of innate stimulatory agents such as pathogens. The sequence is that of Interleukin-1 receptor antagonist protein (IL1RN) from Homo sapiens (Human).